The following is a 78-amino-acid chain: Lantibiotic cinnamycin (78 aa).

Positions methionine 1 to alanine 59 are excised as a propeptide. 2 cross-links (beta-methyllanthionine (Cys-Thr)) span residues cysteine 60 to threonine 77 and cysteine 64 to threonine 70. Residues serine 63–cysteine 73 constitute a cross-link (lanthionine (Ser-Cys)). Positions serine 65–lysine 78 form a cross-link, lysinoalanine (Ser-Lys). Aspartate 74 carries the (3R)-3-hydroxyaspartate modification.

Belongs to the type B lantibiotic family. In terms of processing, maturation of lantibiotics involves the enzymatic conversion of Thr, and Ser into dehydrated AA and the formation of thioether bonds with cysteine or the formation of dialkylamine bonds with lysine. This is followed by membrane translocation and cleavage of the modified precursor.

Functionally, can act as inhibitor of the enzyme phospholipase A2, and of the angiotensin-converting enzyme. Shows inhibitory activities against herpes simplex virus and immunopotentiating activities. Its antimicrobial activities are not very pronounced. In Streptomyces griseoverticillatus (Streptoverticillium griseoverticillatum), this protein is Lantibiotic cinnamycin (cinA).